The following is a 472-amino-acid chain: Transmembrane protein 8B (472 aa).

Positions 1–10 are enriched in low complexity; that stretch reads MNMPQSLGTQ. The tract at residues 1-24 is disordered; the sequence is MNMPQSLGTQPLPPEPPSLGTPIE. Residues 1 to 233 are Extracellular-facing; sequence MNMPQSLGTQ…ADALTYGFQL (233 aa). Asn-100 carries N-linked (GlcNAc...) asparagine glycosylation. Positions 182–221 constitute an EGF-like domain; that stretch reads FLSPCVDDCGPYGQCKLLRTHNYLYAACECKAGWRGWGCT. Cystine bridges form between Cys-186–Cys-196, Cys-190–Cys-209, and Cys-211–Cys-220. The chain crosses the membrane as a helical span at residues 234 to 254; it reads LSTLLLCLSNLMFLPPVVLAI. At 255-257 the chain is on the cytoplasmic side; it reads RSR. Residues 258–277 traverse the membrane as a helical segment; it reads YVLEAAVYTFTMFFSTFYHA. Residues 278 to 292 lie on the Extracellular side of the membrane; that stretch reads CDQPGIVVFCIMDYD. A helical transmembrane segment spans residues 293–313; it reads VLQFCDFLGSLMSVWVTVIAM. Residues 314 to 315 are Cytoplasmic-facing; the sequence is AR. The helical transmembrane segment at 316–336 threads the bilayer; the sequence is LQPVIKQVLYLLGAMLLSMAL. Residues 337 to 342 lie on the Extracellular side of the membrane; the sequence is QLDRHG. The helical transmembrane segment at 343 to 363 threads the bilayer; sequence LWNLLGPSLFALGILATAWTV. Topologically, residues 364 to 379 are cytoplasmic; sequence RSVRRRHCYPPTWRRW. A helical transmembrane segment spans residues 380 to 400; that stretch reads LFYLCPGSLIAGSAVLLYAFV. Residues 401 to 405 lie on the Extracellular side of the membrane; it reads ETRDN. Residues 406 to 426 form a helical membrane-spanning segment; that stretch reads YFYIHSIWHMLIAGSVGFLLP. Over 427 to 472 the chain is Cytoplasmic; that stretch reads PRAKTDRRVPSGARARGCGYQLCINEQEELGLVGPGGTTVSSICVS.

It belongs to the TMEM8 family. May interact with EZR. In terms of processing, N-glycosylated.

It is found in the cell membrane. It localises to the cytoplasm. The protein resides in the nucleus. The protein localises to the mitochondrion. Its subcellular location is the endoplasmic reticulum. May function as a regulator of the EGFR pathway. Probable tumor suppressor which may function in cell growth, proliferation and adhesion. This is Transmembrane protein 8B (Tmem8b) from Mus musculus (Mouse).